The sequence spans 853 residues: Cytochrome P450 monooxygenase mpaDE' (853 aa).

At 1–6 (MESLSL) the chain is on the lumenal side. The chain crosses the membrane as a helical span at residues 7 to 29 (TWITAIAVVLYLVQRYVRSYWRL). The Cytoplasmic segment spans residues 30 to 853 (KDIPGPVLAK…DIENAIEGQK (824 aa)). C449 contributes to the heme binding site.

Belongs to the cytochrome P450 family. Heme is required as a cofactor.

The protein localises to the endoplasmic reticulum membrane. The enzyme catalyses 5-methylorsellinate + reduced [NADPH--hemoprotein reductase] + O2 = 4,6-dihydroxy-2-(hydroxymethyl)-3-methylbenzoate + oxidized [NADPH--hemoprotein reductase] + H2O + H(+). The catalysed reaction is 4,6-dihydroxy-2-(hydroxymethyl)-3-methylbenzoate + H(+) = 5,7-dihydroxy-4-methylphthalide + H2O. It participates in secondary metabolite biosynthesis; terpenoid biosynthesis. Functionally, cytochrome P450 monooxygenase; part of the gene cluster that mediates the biosynthesis of mycophenolic acid (MPA), the first isolated antibiotic natural product in the world obtained from a culture of Penicillium brevicompactum in 1893. MpaDE' is an endoplasmic reticulum-bound enzyme that catalyzes the conversion of 5-methylorsellinic acid (5MOA) into the phthalide compound 5,7-dihydroxy-4,6-dimethylphthalide (DHMP). MpaDE' first catalyzes hydroxylation of 5-MOA to 4,6-dihydroxy-2-(hydroxymethyl)-3-methylbenzoic acid (DHMB), and then acts as a lactone synthase that catalyzes the ring closure to convert DHMB into DHMP. The first step of the pathway is the synthesis of 5-methylorsellinic acid (5MOA) by the cytosolic polyketide synthase mpaC. 5MOA is then converted to the phthalide compound 5,7-dihydroxy-4,6-dimethylphthalide (DHMP) by the endoplasmic reticulum-bound cytochrome P450 monooxygenase mpaDE. MpaDE first catalyzes hydroxylation of 5-MOA to 4,6-dihydroxy-2-(hydroxymethyl)-3-methylbenzoic acid (DHMB). MpaDE then acts as a lactone synthase that catalyzes the ring closure to convert DHMB into DHMP. The next step is the prenylation of DHMP by the Golgi apparatus-associated prenyltransferase mpaA to yield farnesyl-DHMP (FDHMP). The ER-bound oxygenase mpaB then mediates the oxidative cleavage the C19-C20 double bond in FDHMP to yield FDHMP-3C via a mycophenolic aldehyde intermediate. The O-methyltransferase mpaG catalyzes the methylation of FDHMP-3C to yield MFDHMP-3C. After the cytosolic methylation of FDHMP-3C, MFDHMP-3C enters into peroxisomes probably via free diffusion due to its low molecular weight. Upon a peroxisomal CoA ligation reaction, catalyzed by a beta-oxidation component enzyme acyl-CoA ligase ACL891, MFDHMP-3C-CoA would then be restricted to peroxisomes for the following beta-oxidation pathway steps. The peroxisomal beta-oxidation machinery than converts MFDHMP-3C-CoA into MPA_CoA, via a beta-oxidation chain-shortening process. Finally mpaH acts as a peroxisomal acyl-CoA hydrolase with high substrate specificity toward MPA-CoA to release the final product MPA. The polypeptide is Cytochrome P450 monooxygenase mpaDE' (Penicillium brevicompactum).